The chain runs to 38 residues: Photosystem II reaction center protein L (38 aa).

A helical transmembrane segment spans residues 17 to 37 (SLFWGLLLIFVLAVLFSSYFF).

Belongs to the PsbL family. As to quaternary structure, PSII is composed of 1 copy each of membrane proteins PsbA, PsbB, PsbC, PsbD, PsbE, PsbF, PsbH, PsbI, PsbJ, PsbK, PsbL, PsbM, PsbT, PsbX, PsbY, PsbZ, Psb30/Ycf12, at least 3 peripheral proteins of the oxygen-evolving complex and a large number of cofactors. It forms dimeric complexes.

Its subcellular location is the plastid. It is found in the chloroplast thylakoid membrane. In terms of biological role, one of the components of the core complex of photosystem II (PSII). PSII is a light-driven water:plastoquinone oxidoreductase that uses light energy to abstract electrons from H(2)O, generating O(2) and a proton gradient subsequently used for ATP formation. It consists of a core antenna complex that captures photons, and an electron transfer chain that converts photonic excitation into a charge separation. This subunit is found at the monomer-monomer interface and is required for correct PSII assembly and/or dimerization. This Gracilaria tenuistipitata var. liui (Red alga) protein is Photosystem II reaction center protein L.